Reading from the N-terminus, the 131-residue chain is Large ribosomal subunit protein bL12c (131 aa).

The span at 106 to 125 (KDNTNKENSEEIKQQLEEAG) shows a compositional bias: basic and acidic residues. Positions 106 to 131 (KDNTNKENSEEIKQQLEEAGAKVSIK) are disordered.

It belongs to the bacterial ribosomal protein bL12 family. In terms of assembly, homodimer. Part of the ribosomal stalk of the 50S ribosomal subunit. Forms a multimeric L10(L12)X complex, where L10 forms an elongated spine to which 2 to 4 L12 dimers bind in a sequential fashion. Binds GTP-bound translation factors.

It is found in the plastid. The protein resides in the chloroplast. In terms of biological role, forms part of the ribosomal stalk which helps the ribosome interact with GTP-bound translation factors. Is thus essential for accurate translation. This chain is Large ribosomal subunit protein bL12c, found in Gracilaria tenuistipitata var. liui (Red alga).